Reading from the N-terminus, the 275-residue chain is Tryptophan synthase alpha chain (275 aa).

Residues E51 and E62 each act as proton acceptor in the active site.

This sequence belongs to the TrpA family. Tetramer of two alpha and two beta chains.

It catalyses the reaction (1S,2R)-1-C-(indol-3-yl)glycerol 3-phosphate + L-serine = D-glyceraldehyde 3-phosphate + L-tryptophan + H2O. Its pathway is amino-acid biosynthesis; L-tryptophan biosynthesis; L-tryptophan from chorismate: step 5/5. The alpha subunit is responsible for the aldol cleavage of indoleglycerol phosphate to indole and glyceraldehyde 3-phosphate. This is Tryptophan synthase alpha chain from Caulobacter sp. (strain K31).